A 237-amino-acid polypeptide reads, in one-letter code: Ribosomal RNA small subunit methyltransferase G (237 aa).

S-adenosyl-L-methionine is bound by residues Gly-78, Phe-83, 129–130 (AE), and Arg-148. The segment at 216 to 237 (SKKKETPNKYPRKAGTPNKKPL) is disordered.

This sequence belongs to the methyltransferase superfamily. RNA methyltransferase RsmG family.

The protein resides in the cytoplasm. Functionally, specifically methylates the N7 position of a guanine in 16S rRNA. In Streptococcus agalactiae serotype Ia (strain ATCC 27591 / A909 / CDC SS700), this protein is Ribosomal RNA small subunit methyltransferase G.